Reading from the N-terminus, the 489-residue chain is ATF/CREB activator 1 (489 aa).

The bZIP domain occupies 384–447 (AWKRARLLER…QKMKKISRLH (64 aa)). Residues 386-406 (KRARLLERNRIAASKCRQRKK) form a basic motif region. The interval 412-419 (LQREFDQI) is leucine-zipper.

Belongs to the bZIP family.

It is found in the nucleus. Transcriptional activator of promoters containing ATF/CREB sites. Can independently stimulate transcription through ATF/CREB sites. Important for a variety of biological functions including growth on non-optimal carbon sources. Regulates the expression of COS8. Has efficient silencing blocking activities. This chain is ATF/CREB activator 1 (ACA1), found in Saccharomyces cerevisiae (strain ATCC 204508 / S288c) (Baker's yeast).